The following is a 192-amino-acid chain: uncharacterized protein (192 aa).

It to A.aeolicus AQ_054.

This is an uncharacterized protein from Thermotoga maritima (strain ATCC 43589 / DSM 3109 / JCM 10099 / NBRC 100826 / MSB8).